Consider the following 298-residue polypeptide: ADP/ATP translocase 2 (298 aa).

Met-1 carries the N-acetylmethionine modification. Residues 1-7 (MTDAAVS) are Mitochondrial intermembrane-facing. Thr-2 bears the N-acetylthreonine; in ADP/ATP translocase 2, N-terminally processed mark. Residues 6-98 (VSFAKDFLAG…FAFKDKYKQI (93 aa)) form a Solcar 1 repeat. Ser-7 is subject to Phosphoserine. Residues 8 to 37 (FAKDFLAGGVAAAISKTAVAPIERVKLLLQ) form a helical membrane-spanning segment. Lys-23 bears the N6-malonyllysine mark. Residues 38 to 74 (VQHASKQITADKQYKGIIDCVVRIPKEQGVLSFWRGN) lie on the Mitochondrial matrix side of the membrane. Lys-43 is subject to N6-succinyllysine. N6,N6,N6-trimethyllysine; alternate is present on Lys-52. Lys-52 carries the post-translational modification N6,N6-dimethyllysine; alternate. Lys-52 is modified (N6-methyllysine; alternate). The chain crosses the membrane as a helical span at residues 75 to 99 (LANVIRYFPTQALNFAFKDKYKQIF). ADP contacts are provided by Arg-80 and Lys-92. Lys-92 and Lys-96 each carry N6-malonyllysine. Residues 100-109 (LGGVDKRTQF) are Mitochondrial intermembrane-facing. Lys-105 is subject to N6-acetyllysine; alternate. At Lys-105 the chain carries N6-succinyllysine; alternate. A helical transmembrane segment spans residues 110–130 (WRYFAGNLASGGAAGATSLCF). Solcar repeat units follow at residues 111–201 (RYFA…AKGM) and 212–297 (ISWM…IKKF). Over 131 to 178 (VYPLDFARTRLAADVGKAGAEREFRGLGDCLVKIYKSDGIRGLYQGFN) the chain is Mitochondrial matrix. Lys-147 is modified (N6-methyllysine; alternate). The residue at position 147 (Lys-147) is an N6-acetyllysine; alternate. N6-succinyllysine; alternate is present on Lys-147. Lys-147 bears the N6-malonyllysine; alternate mark. 2 positions are modified to N6-acetyllysine: Lys-163 and Lys-166. Residues 179-199 (VSVQGIIIYRAAYFGIYDTAK) traverse the membrane as a helical segment. Residues 200 to 210 (GMLPDPKNTHI) are Mitochondrial intermembrane-facing. A helical membrane pass occupies residues 211-231 (FISWMIAQSVTAVAGLTSYPF). At 232–273 (DTVRRRMMMQSGRKGTDIMYTGTLDCWRKIARDEGAKAFFKG) the chain is on the mitochondrial matrix side. ADP is bound at residue Arg-235. Residues 235 to 240 (RRRMMM) are important for transport activity. The Nucleotide carrier signature motif motif lies at 235 to 240 (RRRMMM). Lys-268 is modified (N6-acetyllysine; alternate). Lys-268 carries the post-translational modification N6-succinyllysine; alternate. The chain crosses the membrane as a helical span at residues 274 to 291 (AWSNVLRGMGGAFVLVLY). The Mitochondrial intermembrane portion of the chain corresponds to 292 to 298 (DEIKKFT).

The protein belongs to the mitochondrial carrier (TC 2.A.29) family. Monomer. Component of the MMXD complex, which includes CIAO1, ERCC2, CIAO2B, MMS19 and SLC25A5/ANT2. Interacts with AK4. Interacts with TIMM44; leading to inhibit the presequence translocase TIMM23, thereby promoting stabilization of PINK1. Post-translationally, trimethylated by ANTKMT at Lys-52.

It localises to the mitochondrion inner membrane. The protein localises to the membrane. It catalyses the reaction ADP(in) + ATP(out) = ADP(out) + ATP(in). The enzyme catalyses H(+)(in) = H(+)(out). With respect to regulation, the matrix-open state (m-state) is inhibited by the membrane-permeable bongkrekic acid (BKA). The cytoplasmic-open state (c-state) is inhibited by the membrane-impermeable toxic inhibitor carboxyatractyloside (CATR). Proton transporter activity is inhibited by ADP:ATP antiporter activity. ADP:ATP antiporter that mediates import of ADP into the mitochondrial matrix for ATP synthesis, and export of ATP out to fuel the cell. Cycles between the cytoplasmic-open state (c-state) and the matrix-open state (m-state): operates by the alternating access mechanism with a single substrate-binding site intermittently exposed to either the cytosolic (c-state) or matrix (m-state) side of the inner mitochondrial membrane. In addition to its ADP:ATP antiporter activity, also involved in mitochondrial uncoupling and mitochondrial permeability transition pore (mPTP) activity. Plays a role in mitochondrial uncoupling by acting as a proton transporter: proton transport uncouples the proton flows via the electron transport chain and ATP synthase to reduce the efficiency of ATP production and cause mitochondrial thermogenesis. Proton transporter activity is inhibited by ADP:ATP antiporter activity, suggesting that SLC25A5/ANT2 acts as a master regulator of mitochondrial energy output by maintaining a delicate balance between ATP production (ADP:ATP antiporter activity) and thermogenesis (proton transporter activity). Proton transporter activity requires free fatty acids as cofactor, but does not transport it. Probably mediates mitochondrial uncoupling in tissues that do not express UCP1. Also plays a key role in mPTP opening, a non-specific pore that enables free passage of the mitochondrial membranes to solutes of up to 1.5 kDa, and which contributes to cell death. It is however unclear if SLC25A5/ANT2 constitutes a pore-forming component of mPTP or regulates it. Acts as a regulator of mitophagy independently of ADP:ATP antiporter activity: promotes mitophagy via interaction with TIMM44, leading to inhibit the presequence translocase TIMM23, thereby promoting stabilization of PINK1. As part of the mitotic spindle-associated MMXD complex it may play a role in chromosome segregation. This is ADP/ATP translocase 2 from Bos taurus (Bovine).